A 147-amino-acid polypeptide reads, in one-letter code: MSSPEGSSVTFRRAPATLRRPAIERFARRLQKEVADGAPFDTLITGDAELRRLNRDFRKKDYATDVLSFPSGGPGLGDLAISLGRARAQAREFGHTIEQEISILMLHGVLHLLGHDHEVDRGRMASLEKRWRAKLGLPTGLIERVQS.

Zn(2+) contacts are provided by His107, His111, and His117.

The protein belongs to the endoribonuclease YbeY family. Requires Zn(2+) as cofactor.

The protein localises to the cytoplasm. In terms of biological role, single strand-specific metallo-endoribonuclease involved in late-stage 70S ribosome quality control and in maturation of the 3' terminus of the 16S rRNA. The chain is Endoribonuclease YbeY from Solibacter usitatus (strain Ellin6076).